The sequence spans 291 residues: Release factor glutamine methyltransferase (291 aa).

S-adenosyl-L-methionine contacts are provided by residues 127–131 (GTGSG), Asp150, Trp179, and Asn196. 196–199 (NPPY) lines the substrate pocket.

Belongs to the protein N5-glutamine methyltransferase family. PrmC subfamily.

It carries out the reaction L-glutaminyl-[peptide chain release factor] + S-adenosyl-L-methionine = N(5)-methyl-L-glutaminyl-[peptide chain release factor] + S-adenosyl-L-homocysteine + H(+). Methylates the class 1 translation termination release factors RF1/PrfA and RF2/PrfB on the glutamine residue of the universally conserved GGQ motif. The polypeptide is Release factor glutamine methyltransferase (Thermosynechococcus vestitus (strain NIES-2133 / IAM M-273 / BP-1)).